Consider the following 57-residue polypeptide: Potassium channel toxin alpha-KTx 17.2 (57 aa).

An N-terminal signal peptide occupies residues 1–26 (MKTIIVLLLLTIVAAAVVESSPKARR). Intrachain disulfides connect Cys-30-Cys-46, Cys-36-Cys-51, and Cys-40-Cys-53.

This sequence belongs to the short scorpion toxin superfamily. Potassium channel inhibitor family. Alpha-KTx 17 subfamily. Expressed by the venom gland.

The protein resides in the secreted. Its function is as follows. Inhibits voltage-gated potassium channels. The chain is Potassium channel toxin alpha-KTx 17.2 from Lychas mucronatus (Chinese swimming scorpion).